The following is an 87-amino-acid chain: Co-chaperonin GroES (87 aa).

This sequence belongs to the GroES chaperonin family. As to quaternary structure, heptamer of 7 subunits arranged in a ring. Interacts with the chaperonin GroEL.

Its subcellular location is the cytoplasm. Functionally, together with the chaperonin GroEL, plays an essential role in assisting protein folding. The GroEL-GroES system forms a nano-cage that allows encapsulation of the non-native substrate proteins and provides a physical environment optimized to promote and accelerate protein folding. GroES binds to the apical surface of the GroEL ring, thereby capping the opening of the GroEL channel. The chain is Co-chaperonin GroES from Campylobacter hominis (strain ATCC BAA-381 / DSM 21671 / CCUG 45161 / LMG 19568 / NCTC 13146 / CH001A).